A 103-amino-acid polypeptide reads, in one-letter code: Methanol dehydrogenase [cytochrome c] subunit 2 (103 aa).

Residues 1 to 20 (MKRILTLTVAALALGTPALA) form the signal peptide. Residues Cys26 and Cys32 are joined by a disulfide bond.

Belongs to the methanol dehydrogenase subunit 2 family. Heterotetramer composed of 2 alpha and 2 beta subunits.

It localises to the periplasm. The catalysed reaction is 2 Fe(III)-[cytochrome cL] + a primary alcohol = 2 Fe(II)-[cytochrome cL] + an aldehyde + 2 H(+). In terms of biological role, catalyzes the oxidation of primary alcohols including methanol. This chain is Methanol dehydrogenase [cytochrome c] subunit 2 (moxI), found in Paracoccus denitrificans.